Here is a 93-residue protein sequence, read N- to C-terminus: Small integral membrane protein 36 (93 aa).

Residues 14 to 34 (LIILVASYVILLLVFLISCVL) form a helical membrane-spanning segment. The tract at residues 73-93 (PKGPGLSLGDPAPLGKKSTMV) is disordered.

The protein resides in the membrane. In Homo sapiens (Human), this protein is Small integral membrane protein 36.